Reading from the N-terminus, the 108-residue chain is MEKKIDEIDFEKAGGIVPVIVQDNNTHEVLTLAYSNRESLELTRKTGLSWFWSRSRSKLWQKGEESGNTQQVKKILVDCDQDALIYLVEPSGPACHTGERNCFHHSLL.

Residue Asp78 coordinates Mg(2+). Cys79 is a binding site for Zn(2+). Residues Asp80 and Asp82 each contribute to the Mg(2+) site. Zn(2+) is bound by residues Cys95 and Cys102.

It belongs to the PRA-CH family. As to quaternary structure, homodimer. The cofactor is Mg(2+). It depends on Zn(2+) as a cofactor.

Its subcellular location is the cytoplasm. It catalyses the reaction 1-(5-phospho-beta-D-ribosyl)-5'-AMP + H2O = 1-(5-phospho-beta-D-ribosyl)-5-[(5-phospho-beta-D-ribosylamino)methylideneamino]imidazole-4-carboxamide. Its pathway is amino-acid biosynthesis; L-histidine biosynthesis; L-histidine from 5-phospho-alpha-D-ribose 1-diphosphate: step 3/9. In terms of biological role, catalyzes the hydrolysis of the adenine ring of phosphoribosyl-AMP. The polypeptide is Phosphoribosyl-AMP cyclohydrolase (Cenarchaeum symbiosum (strain A)).